A 482-amino-acid polypeptide reads, in one-letter code: Tripartite motif-containing protein 10 (482 aa).

The segment at 16–61 adopts an RING-type zinc-finger fold; the sequence is CPICQGTLREPVTIDCGHNFCCVCLTRYLEIPCLDPGELPTCPLCK. The segment at 95-136 adopts a B box-type zinc-finger fold; it reads EEEDVCLEHREKVYYFCEDDEMQLCVVCREAWEHRHHTVRFL. Positions 100, 103, 122, and 128 each coordinate Zn(2+). The B30.2/SPRY domain maps to 293 to 482; the sequence is REMKTFLEKL…GRGSKFSLSS (190 aa).

It belongs to the TRIM/RBCC family. As to quaternary structure, interacts with IFNAR1; this interaction prevents association of IFNAR1 with TYK2.

The protein resides in the cytoplasm. Its function is as follows. E3 ligase that plays an essential role in the differentiation and survival of terminal erythroid cells. May directly bind to PTEN and promote its ubiquitination, resulting in its proteasomal degradation and activation of hypertrophic signaling. In addition, plays a role in immune response regulation by repressing the phosphorylation of STAT1 and STAT2 in the interferon/JAK/STAT signaling pathway independent of its E3 ligase activity. Mechanistically, interacts with the intracellular domain of IFNAR1 and thereby inhibits the association of TYK2 and IFNAR1. This is Tripartite motif-containing protein 10 (TRIM10) from Sus scrofa (Pig).